Reading from the N-terminus, the 162-residue chain is Meiosis-specific protein HED1 (162 aa).

The interval 67-124 is disordered; the sequence is KNLSENTGGGSPNGGAYLDAKKGVREQDQYQGGPSKELDRLQPPPSMKKSPPRKKKSL. A compositionally biased stretch (basic and acidic residues) spans 85-94; sequence DAKKGVREQD.

Interacts with RAD51.

Its subcellular location is the nucleus. It localises to the chromosome. In terms of biological role, involved in regulation of meiotic recombination and repair of DNA damage. Inhibits RAD51-mediated recombination when the meiotic recombination machinery is impaired. This is Meiosis-specific protein HED1 (HED1) from Saccharomyces cerevisiae (strain ATCC 204508 / S288c) (Baker's yeast).